Here is a 705-residue protein sequence, read N- to C-terminus: Complement C1r subcomponent (705 aa).

Residues Met1–Gly17 form the signal peptide. One can recognise a CUB 1 domain in the interval Ser18–Val141. 3 residues coordinate Ca(2+): Glu66, Asp74, and Asp119. An intrachain disulfide couples Cys71 to Cys89. Asn125 carries an N-linked (GlcNAc...) asparagine glycan. Positions 142, 143, and 145 each coordinate Ca(2+). One can recognise an EGF-like; calcium-binding domain in the interval Asp142–Gln190. 4 cysteine pairs are disulfide-bonded: Cys146-Cys165, Cys161-Cys174, Cys176-Cys189, and Cys193-Cys220. Residues Asn167, Tyr168, and Gly171 each contribute to the Ca(2+) site. Asn167 is subject to (3R)-3-hydroxyasparagine. The 113-residue stretch at Cys193–Glu305 folds into the CUB 2 domain. The residue at position 206 (Ser206) is a Phosphoserine; by CK2. The N-linked (GlcNAc...) asparagine glycan is linked to Asn221. The Ca(2+) site is built by Asp243, Asp253, Asp290, and Asp294. Cys250 and Cys268 are disulfide-bonded. Sushi domains lie at Ile307–Ile373 and Lys374–Pro449. Disulfide bonds link Cys309–Cys358, Cys338–Cys371, Cys376–Cys429, Cys406–Cys447, and Cys451–Cys577. Residues Ile464–Glu702 enclose the Peptidase S1 domain. The active-site Charge relay system is His502. A glycan (N-linked (GlcNAc...) asparagine) is linked at Asn514. Asp557 (charge relay system) is an active-site residue. A glycan (N-linked (GlcNAc...) asparagine) is linked at Asn581. Intrachain disulfides connect Cys620–Cys639 and Cys650–Cys680. Ser654 functions as the Charge relay system in the catalytic mechanism.

This sequence belongs to the peptidase S1 family. Core component of the complement C1 complex, a calcium-dependent complex composed of 1 molecule of the C1Q subcomplex, 2 molecules of C1R and 2 molecules of C1S. The C1Q subcomplex is composed 18 subunits: 3 chains of C1QA, C1QB, and C1QC trimerize to form 6 collagen-like triple helices connected to six globular ligand-recognition modules. Within the C1 complex, C1R is a dimer of identical chains, each of which is activated by cleavage into two chains, heavy and light, connected by disulfide bonds. In terms of processing, cleaved and activated by autocatalytic processing to generate Complement C1r subcomponent heavy and light chains that are connected by disulfide bonds. Post-translationally, the iron and 2-oxoglutarate dependent 3-hydroxylation of aspartate and asparagine is (R) stereospecific within EGF domains.

The protein resides in the secreted. It is found in the cell surface. The catalysed reaction is Selective cleavage of Lys(or Arg)-|-Ile bond in complement subcomponent C1s to form the active form of C1s (EC 3.4.21.42).. Its activity is regulated as follows. Activated by the C1Q subcomplex of the C1 complex following C1Q binding to immunoglobulins (IgG or IgM) complexed with antigens to form antigen-antibody complexes on the surface of pathogens. Immunoglobulin-binding promotes autoactivation of C1R, which results in the cleavage of the Arg-Ile bond in the catalytic domain. In terms of biological role, serine protease component of the complement C1 complex, a multiprotein complex that initiates the classical pathway of the complement system, a cascade of proteins that leads to phagocytosis and breakdown of pathogens and signaling that strengthens the adaptive immune system. C1R catalyzes the first enzymatic step in the classical complement pathway: it is activated by the C1Q subcomplex of the C1 complex, which associates with IgG or IgM immunoglobulins complexed with antigens to form antigen-antibody complexes on the surface of pathogens. Immunoglobulin-binding promotes the autocatalytic cleavage and activation of C1R. Activated C1R then cleaves and activates C1S, the second protease of the classical complement pathway. It is unclear if C1R activates C1S within single, strained C1 complexes or between neighboring C1 complexes on surfaces. In Homo sapiens (Human), this protein is Complement C1r subcomponent.